The following is a 352-amino-acid chain: Ion-translocating oxidoreductase complex subunit D (352 aa).

Transmembrane regions (helical) follow at residues 20–40 (IMLLVLLAAVPGIAAQLWFFG), 42–62 (GTLVQILLASVSALLAEALVL), 78–109 (ALLTGLLLAVSIPPLAPWWMVVLGTVFAVIIA), 123–143 (PAMIGYVVLLISFPVQMTSWL), and 148–168 (IAVNIPGFIDAIQVIFSGHIT). Thr187 is subject to FMN phosphoryl threonine. Helical transmembrane passes span 215 to 235 (LAGVGWQWVNLAWLAGGVWLL), 242 to 262 (WHIPLSFLVTLALCATLGWLF), 267 to 287 (LAAPQIHLLSGATMLGAFFIL), 301 to 321 (LIFGALAGLLVWLIRSFGGYP), and 322 to 342 (DGVAFAVLLANITVPLIDYYT).

Belongs to the NqrB/RnfD family. In terms of assembly, the complex is composed of six subunits: RsxA, RsxB, RsxC, RsxD, RsxE and RsxG. Requires FMN as cofactor.

The protein localises to the cell inner membrane. In terms of biological role, part of a membrane-bound complex that couples electron transfer with translocation of ions across the membrane. Required to maintain the reduced state of SoxR. The protein is Ion-translocating oxidoreductase complex subunit D of Escherichia coli (strain SMS-3-5 / SECEC).